A 692-amino-acid polypeptide reads, in one-letter code: Elongation factor G (692 aa).

The region spanning 8–283 (KNTRNIGIMA…AVLDYLPSPV (276 aa)) is the tr-type G domain. Residues 17 to 24 (AHIDAGKT), 81 to 85 (DTPGH), and 135 to 138 (NKMD) each bind GTP.

Belongs to the TRAFAC class translation factor GTPase superfamily. Classic translation factor GTPase family. EF-G/EF-2 subfamily.

Its subcellular location is the cytoplasm. Catalyzes the GTP-dependent ribosomal translocation step during translation elongation. During this step, the ribosome changes from the pre-translocational (PRE) to the post-translocational (POST) state as the newly formed A-site-bound peptidyl-tRNA and P-site-bound deacylated tRNA move to the P and E sites, respectively. Catalyzes the coordinated movement of the two tRNA molecules, the mRNA and conformational changes in the ribosome. The sequence is that of Elongation factor G from Exiguobacterium sibiricum (strain DSM 17290 / CCUG 55495 / CIP 109462 / JCM 13490 / 255-15).